We begin with the raw amino-acid sequence, 218 residues long: Protease PrsW (218 aa).

A helical transmembrane segment spans residues 1 to 23; the sequence is MFAIISAGIAPGIALLSYFYLKD. Residues 24–30 are Cytoplasmic-facing; the sequence is QYDNEPV. A helical transmembrane segment spans residues 31 to 53; that stretch reads HMVLRSFFLGVVLVFPIMFIQYV. The Extracellular portion of the chain corresponds to 54-98; sequence LEKENVGGGSFFVSFLSSGFLEESLKWFILMISVYPHAHFDEHYD. Residues 99–121 traverse the membrane as a helical segment; it reads GIVYGASVSLGFATLENILYLIG. Over 122 to 129 the chain is Cytoplasmic; sequence HGVEHAFV. A helical transmembrane segment spans residues 130–151; it reads RALLPVSCHALIGVIMGFYLGK. Residues 152-180 lie on the Extracellular side of the membrane; sequence ARFSADKARVKWLTLSLVVPSLLHGSYDF. A helical transmembrane segment spans residues 181–203; it reads ILTALSNWIYYMLPFMVFLWWFG. Residues 204-218 lie on the Cytoplasmic side of the membrane; the sequence is LRKAKKARSVNMMQV.

This sequence belongs to the protease PrsW family.

It is found in the cell membrane. Involved in the degradation of anti-sigma-W factor RsiW. Responsible for Site-1 cleavage of the RsiW anti-sigma factor. This results, after two other proteolytic steps catalyzed by the RasP and ClpXP proteases, in the release of SigW and the transcription activation of the genes under the control of the sigma-W factor. Seems to be responsible for sensing antimicrobial peptides that damage the cell membrane and other agents that cause cell envelope stress. Therefore it is a protease governing regulated intramembrane proteolysis and resistance to antimicrobial peptides in B.subtilis. This is Protease PrsW from Bacillus subtilis (strain 168).